A 184-amino-acid polypeptide reads, in one-letter code: Protein GrpE (184 aa).

The tract at residues 1-35 is disordered; sequence MTQENQNPPPEQEDVAADPQVNEAAASEPAAVKTP.

It belongs to the GrpE family. In terms of assembly, homodimer.

The protein localises to the cytoplasm. Functionally, participates actively in the response to hyperosmotic and heat shock by preventing the aggregation of stress-denatured proteins, in association with DnaK and GrpE. It is the nucleotide exchange factor for DnaK and may function as a thermosensor. Unfolded proteins bind initially to DnaJ; upon interaction with the DnaJ-bound protein, DnaK hydrolyzes its bound ATP, resulting in the formation of a stable complex. GrpE releases ADP from DnaK; ATP binding to DnaK triggers the release of the substrate protein, thus completing the reaction cycle. Several rounds of ATP-dependent interactions between DnaJ, DnaK and GrpE are required for fully efficient folding. This Polynucleobacter asymbioticus (strain DSM 18221 / CIP 109841 / QLW-P1DMWA-1) (Polynucleobacter necessarius subsp. asymbioticus) protein is Protein GrpE.